The following is a 698-amino-acid chain: Auxin response factor 22 (698 aa).

The TF-B3 DNA-binding region spans 128–230 (FAKTLTQSDA…ELCVGIRRAK (103 aa)). A compositionally biased stretch (polar residues) spans 549–577 (TSSGSTETLSPGVTGNSSPNGNAHKTGNA). Positions 549-579 (TSSGSTETLSPGVTGNSSPNGNAHKTGNASD) are disordered. The 81-residue stretch at 603 to 683 (AGHCKVFMES…RRLTIIAGDR (81 aa)) folds into the PB1 domain.

It belongs to the ARF family. Homodimers and heterodimers. In terms of tissue distribution, expressed in roots, culms, leaves and young panicles.

It localises to the nucleus. In terms of biological role, auxin response factors (ARFs) are transcriptional factors that bind specifically to the DNA sequence 5'-TGTCTC-3' found in the auxin-responsive promoter elements (AuxREs). This chain is Auxin response factor 22 (ARF22), found in Oryza sativa subsp. japonica (Rice).